We begin with the raw amino-acid sequence, 732 residues long: Acetophenone carboxylase gamma subunit (732 aa).

This sequence belongs to the HyuA family. Acetophenone carboxylase consists of five subunits; a heterooctameric subcomplex of two alpha (Apc1), two beta (Apc2), two gamma (Apc3) and two delta (Apc4) subunits assembles with the epsilon (Apc5) subunit in an unknown stoichiometry. The cofactor is Mg(2+). Mn(2+) serves as cofactor.

It localises to the cytoplasm. It carries out the reaction acetophenone + hydrogencarbonate + 2 ATP + H2O = 3-oxo-3-phenylpropanoate + 2 ADP + 2 phosphate + 2 H(+). Its activity is regulated as follows. Inhibited by zinc ions, carbamoylphosphate and beta,gamma-imido-ATP. Its function is as follows. Catalyzes the carboxylation of acetophenone to form 3-oxo-3-phenylpropanoate (benzoylacetate) in the anaerobic catabolism of ethylbenzene. Also carboxylates propiophenone at the same rate and 4-acetyl-pyridine at lower rates. The sequence is that of Acetophenone carboxylase gamma subunit (apc3) from Aromatoleum aromaticum (strain DSM 19018 / LMG 30748 / EbN1) (Azoarcus sp. (strain EbN1)).